A 240-amino-acid chain; its full sequence is MSRRRTLGPKKKIALLVSAVTVAGGGAFVMASTSNASPPTTKSAAESTACLGLATALGNNEKFIADQQANPDAQSEARIANRQAVIEEIKRKQEASGCTVGESAQDSQTAQPSQPAQGGEQAGGGEQAGGAEEAGGAQASQPAESAPAENAGGGAAASGQQVCNGSTVTLSGEGGAPAASSNQFPAGTKLKVTNLDNNKSTTVEVTSVSGSCVLLNNAAFEQVREAGKFLIRRAVIEKVG.

The interval 93–160 (QEASGCTVGE…AGGGAAASGQ (68 aa)) is disordered. Composition is skewed to low complexity over residues 110 to 119 (AQPSQPAQGG) and 129 to 150 (GGAE…PAEN).

This is an uncharacterized protein from Streptomyces viridochromogenes.